A 358-amino-acid polypeptide reads, in one-letter code: Serine/threonine-protein phosphatase 2A activator 2 (358 aa).

It belongs to the PTPA-type PPIase family.

It is found in the cytoplasm. The enzyme catalyses [protein]-peptidylproline (omega=180) = [protein]-peptidylproline (omega=0). Its function is as follows. PPIases accelerate the folding of proteins. It catalyzes the cis-trans isomerization of proline imidic peptide bonds in oligopeptides. Acts as a regulatory subunit for PP2A-like phosphatases modulating their activity or substrate specificity, probably by inducing a conformational change in the catalytic subunit, a direct target of the PPIase. Can reactivate inactive phosphatase PP2A-phosphatase methylesterase complexes (PP2Ai) in presence of ATP and Mg(2+) by dissociating the inactive form from the complex. This chain is Serine/threonine-protein phosphatase 2A activator 2 (RRD2), found in Candida glabrata (strain ATCC 2001 / BCRC 20586 / JCM 3761 / NBRC 0622 / NRRL Y-65 / CBS 138) (Yeast).